A 535-amino-acid polypeptide reads, in one-letter code: Prolyl 4-hydroxylase subunit alpha-2 (535 aa).

Residues 1–21 (MKLWVSALLMAWFGVLSCVQA) form the signal peptide. Residue N115 is glycosylated (N-linked (GlcNAc...) asparagine). Residues 207–240 (SQVLDYLSYAVFQLGDLHRALELTRRLLSLDPSH) form a TPR repeat. N264 is a glycosylation site (N-linked (GlcNAc...) asparagine). Residues 412-520 (TAELLQVANY…KWVSNKWFHE (109 aa)) enclose the Fe2OG dioxygenase domain. Positions 430 and 432 each coordinate Fe cation. K480 carries the post-translational modification N6-succinyllysine. A Fe cation-binding site is contributed by H501. Residue K511 coordinates 2-oxoglutarate.

Belongs to the P4HA family. In terms of assembly, heterotetramer of two alpha-2 chains and two beta chains (P4HB) (the beta chain is the multi-functional PDI), where P4HB plays the role of a structural subunit; this tetramer catalyzes the formation of 4-hydroxyproline in collagen. It depends on Fe(2+) as a cofactor. Requires L-ascorbate as cofactor. Expressed in the heart, placenta, lung and pancreas.

The protein resides in the endoplasmic reticulum lumen. The catalysed reaction is L-prolyl-[collagen] + 2-oxoglutarate + O2 = trans-4-hydroxy-L-prolyl-[collagen] + succinate + CO2. Inhibited by poly(L-proline) only at very high concentrations. Catalyzes the post-translational formation of 4-hydroxyproline in -Xaa-Pro-Gly- sequences in collagens and other proteins. In Homo sapiens (Human), this protein is Prolyl 4-hydroxylase subunit alpha-2 (P4HA2).